Reading from the N-terminus, the 258-residue chain is D-aminoacyl-tRNA deacylase (258 aa).

Belongs to the DtdA deacylase family. As to quaternary structure, monomer. Zn(2+) is required as a cofactor.

It catalyses the reaction a D-aminoacyl-tRNA + H2O = a tRNA + a D-alpha-amino acid + H(+). It carries out the reaction glycyl-tRNA(Ala) + H2O = tRNA(Ala) + glycine + H(+). In terms of biological role, D-aminoacyl-tRNA deacylase with broad substrate specificity. By recycling D-aminoacyl-tRNA to D-amino acids and free tRNA molecules, this enzyme counteracts the toxicity associated with the formation of D-aminoacyl-tRNA entities in vivo. The protein is D-aminoacyl-tRNA deacylase of Cenarchaeum symbiosum (strain A).